Consider the following 116-residue polypeptide: Protein Rev (116 aa).

At serine 5 the chain carries Phosphoserine; by host CK2. Residues 18–26 (LIKILYQSN) form a homomultimerization region. The disordered stretch occupies residues 23-49 (YQSNPPPSPEGTRQARRNRRRRWRARQ). A Nuclear localization signal and RNA-binding (RRE) motif is present at residues 34–50 (TRQARRNRRRRWRARQR). Over residues 36–49 (QARRNRRRRWRARQ) the composition is skewed to basic residues. The Nuclear export signal and binding to XPO1 signature appears at 73–84 (LQLPPLERLNLN). A disordered region spans residues 86-116 (SEDCGTSGTQGVGSPQISVESPTVLESGTEE). 2 positions are modified to phosphoserine; by host: serine 92 and serine 99.

It belongs to the HIV-1 REV protein family. In terms of assembly, homomultimer; when bound to the RRE. Multimeric assembly is essential for activity and may involve XPO1. Binds to human KPNB1, XPO1, TNPO1, RANBP5 and IPO7. Interacts with the viral Integrase. Interacts with human KHDRBS1. Interacts with human NAP1; this interaction decreases Rev multimerization and stimulates its activity. Interacts with human DEAD-box helicases DDX3 and DDX24; these interactions may serve for viral RNA export to the cytoplasm and packaging, respectively. Interacts with human PSIP1; this interaction may inhibit HIV-1 DNA integration by promoting dissociation of the Integrase-LEDGF/p75 complex. Asymmetrically arginine dimethylated at one site by host PRMT6. Methylation impairs the RNA-binding activity and export of viral RNA from the nucleus to the cytoplasm. In terms of processing, phosphorylated by protein kinase CK2. Presence of, and maybe binding to the N-terminus of the regulatory beta subunit of CK2 is necessary for CK2-mediated Rev's phosphorylation.

The protein resides in the host nucleus. Its subcellular location is the host nucleolus. It is found in the host cytoplasm. Functionally, escorts unspliced or incompletely spliced viral pre-mRNAs (late transcripts) out of the nucleus of infected cells. These pre-mRNAs carry a recognition sequence called Rev responsive element (RRE) located in the env gene, that is not present in fully spliced viral mRNAs (early transcripts). This function is essential since most viral proteins are translated from unspliced or partially spliced pre-mRNAs which cannot exit the nucleus by the pathway used by fully processed cellular mRNAs. Rev itself is translated from a fully spliced mRNA that readily exits the nucleus. Rev's nuclear localization signal (NLS) binds directly to KPNB1/Importin beta-1 without previous binding to KPNA1/Importin alpha-1. KPNB1 binds to the GDP bound form of RAN (Ran-GDP) and targets Rev to the nucleus. In the nucleus, the conversion from Ran-GDP to Ran-GTP dissociates Rev from KPNB1 and allows Rev's binding to the RRE in viral pre-mRNAs. Rev multimerization on the RRE via cooperative assembly exposes its nuclear export signal (NES) to the surface. Rev can then form a complex with XPO1/CRM1 and Ran-GTP, leading to nuclear export of the complex. Conversion from Ran-GTP to Ran-GDP mediates dissociation of the Rev/RRE/XPO1/RAN complex, so that Rev can return to the nucleus for a subsequent round of export. Beside KPNB1, also seems to interact with TNPO1/Transportin-1, RANBP5/IPO5 and IPO7/RANBP7 for nuclear import. The nucleoporin-like HRB/RIP is an essential cofactor that probably indirectly interacts with Rev to release HIV RNAs from the perinuclear region to the cytoplasm. The chain is Protein Rev from Homo sapiens (Human).